Here is a 305-residue protein sequence, read N- to C-terminus: Putative S-adenosyl-L-methionine-dependent methyltransferase Mvan_1344 (305 aa).

S-adenosyl-L-methionine contacts are provided by residues Asp-130 and 159–160 (DL).

This sequence belongs to the UPF0677 family.

Functionally, exhibits S-adenosyl-L-methionine-dependent methyltransferase activity. This Mycolicibacterium vanbaalenii (strain DSM 7251 / JCM 13017 / BCRC 16820 / KCTC 9966 / NRRL B-24157 / PYR-1) (Mycobacterium vanbaalenii) protein is Putative S-adenosyl-L-methionine-dependent methyltransferase Mvan_1344.